We begin with the raw amino-acid sequence, 226 residues long: ATP synthase F(0) complex subunit a (226 aa).

6 helical membrane-spanning segments follow: residues 6–26, 68–88, 97–117, 138–158, 164–184, and 189–209; these read FASF…IIMF, WSLM…LGLL, QLSM…ITGF, IPML…ALAV, ITAG…LTSI, and AILT…VALI.

Belongs to the ATPase A chain family. Component of the ATP synthase complex composed at least of ATP5F1A/subunit alpha, ATP5F1B/subunit beta, ATP5MC1/subunit c (homooctomer), MT-ATP6/subunit a, MT-ATP8/subunit 8, ATP5ME/subunit e, ATP5MF/subunit f, ATP5MG/subunit g, ATP5MK/subunit k, ATP5MJ/subunit j, ATP5F1C/subunit gamma, ATP5F1D/subunit delta, ATP5F1E/subunit epsilon, ATP5PF/subunit F6, ATP5PB/subunit b, ATP5PD/subunit d, ATP5PO/subunit OSCP. ATP synthase complex consists of a soluble F(1) head domain (subunits alpha(3) and beta(3)) - the catalytic core - and a membrane F(0) domain - the membrane proton channel (subunits c, a, 8, e, f, g, k and j). These two domains are linked by a central stalk (subunits gamma, delta, and epsilon) rotating inside the F1 region and a stationary peripheral stalk (subunits F6, b, d, and OSCP). Interacts with DNAJC30; interaction is direct.

It localises to the mitochondrion inner membrane. It catalyses the reaction H(+)(in) = H(+)(out). Functionally, subunit a, of the mitochondrial membrane ATP synthase complex (F(1)F(0) ATP synthase or Complex V) that produces ATP from ADP in the presence of a proton gradient across the membrane which is generated by electron transport complexes of the respiratory chain. ATP synthase complex consist of a soluble F(1) head domain - the catalytic core - and a membrane F(1) domain - the membrane proton channel. These two domains are linked by a central stalk rotating inside the F(1) region and a stationary peripheral stalk. During catalysis, ATP synthesis in the catalytic domain of F(1) is coupled via a rotary mechanism of the central stalk subunits to proton translocation. With the subunit c (ATP5MC1), forms the proton-conducting channel in the F(0) domain, that contains two crucial half-channels (inlet and outlet) that facilitate proton movement from the mitochondrial intermembrane space (IMS) into the matrix. Protons are taken up via the inlet half-channel and released through the outlet half-channel, following a Grotthuss mechanism. The sequence is that of ATP synthase F(0) complex subunit a from Ictidomys tridecemlineatus (Thirteen-lined ground squirrel).